The following is a 457-amino-acid chain: ATP synthase subunit beta (457 aa).

147–154 (GGAGVGKT) contributes to the ATP binding site.

This sequence belongs to the ATPase alpha/beta chains family. In terms of assembly, F-type ATPases have 2 components, CF(1) - the catalytic core - and CF(0) - the membrane proton channel. CF(1) has five subunits: alpha(3), beta(3), gamma(1), delta(1), epsilon(1). CF(0) has three main subunits: a(1), b(2) and c(9-12). The alpha and beta chains form an alternating ring which encloses part of the gamma chain. CF(1) is attached to CF(0) by a central stalk formed by the gamma and epsilon chains, while a peripheral stalk is formed by the delta and b chains.

It is found in the cell inner membrane. It catalyses the reaction ATP + H2O + 4 H(+)(in) = ADP + phosphate + 5 H(+)(out). Produces ATP from ADP in the presence of a proton gradient across the membrane. The catalytic sites are hosted primarily by the beta subunits. In Actinobacillus pleuropneumoniae serotype 3 (strain JL03), this protein is ATP synthase subunit beta.